Consider the following 432-residue polypeptide: Trigger factor (432 aa).

Positions Gly161–Pro246 constitute a PPIase FKBP-type domain.

This sequence belongs to the FKBP-type PPIase family. Tig subfamily.

The protein localises to the cytoplasm. The catalysed reaction is [protein]-peptidylproline (omega=180) = [protein]-peptidylproline (omega=0). In terms of biological role, involved in protein export. Acts as a chaperone by maintaining the newly synthesized protein in an open conformation. Functions as a peptidyl-prolyl cis-trans isomerase. This Aliivibrio fischeri (strain MJ11) (Vibrio fischeri) protein is Trigger factor.